Here is a 195-residue protein sequence, read N- to C-terminus: MALLPSLLTALVVYELWPCGALGCDLPQNHILVSRKNFVLLGQMSRISSAICLKDRKDFRFPQDMADGRQFPEAQAASVLHEMLQQIFSLFHTERSSAAWNTTLLDELCTGLLRQLEDLDTCLEQEMGEEESALGTVRPTLAVKRYFRGIHLYLKEKKYSDCAWEIVRMEIMRSFSSSANLQGRLRMKDGDLGSP.

Positions 1–23 (MALLPSLLTALVVYELWPCGALG) are cleaved as a signal peptide. Cystine bridges form between Cys-24–Cys-122 and Cys-52–Cys-162. Asn-101 carries an N-linked (GlcNAc...) asparagine glycan.

The protein belongs to the alpha/beta interferon family.

It is found in the secreted. The sequence is that of Interferon omega-2 from Equus caballus (Horse).